Reading from the N-terminus, the 288-residue chain is Polyamine aminopropyltransferase (288 aa).

Residues serine 9–methionine 242 enclose the PABS domain. S-methyl-5'-thioadenosine is bound at residue glutamine 36. Histidine 67 and aspartate 91 together coordinate spermidine. S-methyl-5'-thioadenosine is bound by residues glutamate 111 and asparagine 143–glycine 144. The active-site Proton acceptor is the aspartate 162. Proline 169 serves as a coordination point for S-methyl-5'-thioadenosine.

The protein belongs to the spermidine/spermine synthase family. In terms of assembly, homodimer or homotetramer.

It localises to the cytoplasm. The enzyme catalyses S-adenosyl 3-(methylsulfanyl)propylamine + putrescine = S-methyl-5'-thioadenosine + spermidine + H(+). It functions in the pathway amine and polyamine biosynthesis; spermidine biosynthesis; spermidine from putrescine: step 1/1. Functionally, catalyzes the irreversible transfer of a propylamine group from the amino donor S-adenosylmethioninamine (decarboxy-AdoMet) to putrescine (1,4-diaminobutane) to yield spermidine. The protein is Polyamine aminopropyltransferase of Prochlorococcus marinus (strain NATL1A).